Consider the following 196-residue polypeptide: Adenylate kinase (196 aa).

Residue 9 to 17 coordinates ATP; it reads GIPGVGKST.

Belongs to the archaeal adenylate kinase family.

It is found in the cytoplasm. It carries out the reaction AMP + ATP = 2 ADP. This chain is Adenylate kinase (adkA), found in Pyrococcus abyssi (strain GE5 / Orsay).